A 360-amino-acid chain; its full sequence is Phospho-N-acetylmuramoyl-pentapeptide-transferase (360 aa).

Over 1–25 the chain is Periplasmic; the sequence is MLVWLAEHLVKYYSGFNVFSYLTFR. A helical transmembrane segment spans residues 26–46; sequence AIVSLLTALFISLWMGPRMIA. Residues 47–71 lie on the Cytoplasmic side of the membrane; sequence RLQKLSFGQVVRNDGPESHFSKRGT. A helical transmembrane segment spans residues 72 to 92; the sequence is PTMGGIMILTSIVISVLLWAY. Residue P93 is a topological domain, periplasmic. The chain crosses the membrane as a helical span at residues 94-114; that stretch reads SNPYVWCVLVVLIGYGIIGFV. Over 115–131 the chain is Cytoplasmic; sequence DDYRKVVRKDTKGLIAR. Residues 132–152 traverse the membrane as a helical segment; it reads WKYFWMSVIALGVAFALYLVG. The Periplasmic portion of the chain corresponds to 153–167; it reads KDTPATQLVVPFFKD. The helical transmembrane segment at 168-188 threads the bilayer; sequence VMPQLGLFYILLSYFVIVGTG. Residues 189-198 lie on the Cytoplasmic side of the membrane; sequence NAVNLTDGLD. A helical transmembrane segment spans residues 199–219; sequence GLAIMPTVFVAAGFALVAWAT. Topologically, residues 220–235 are periplasmic; sequence GNMNFANYLHIPYLRH. A helical membrane pass occupies residues 236–256; sequence AGELVIVCTAIVGAGLGFLWF. At 257–262 the chain is on the cytoplasmic side; it reads NTYPAQ. The helical transmembrane segment at 263-283 threads the bilayer; it reads VFMGDVGSLALGGALGIIAVL. Residues 284 to 287 lie on the Periplasmic side of the membrane; that stretch reads LRQE. Residues 288 to 308 traverse the membrane as a helical segment; it reads FLLVIMGGVFVVETLSVILQV. The Cytoplasmic portion of the chain corresponds to 309–337; the sequence is GSFKLRGQRIFRMAPIHHHYELKGWPEPR. Residues 338–358 traverse the membrane as a helical segment; sequence VIVRFWIISLMLVLIGLATLK. The Periplasmic portion of the chain corresponds to 359-360; the sequence is VR.

The protein belongs to the glycosyltransferase 4 family. MraY subfamily. Mg(2+) is required as a cofactor.

It localises to the cell inner membrane. The enzyme catalyses UDP-N-acetyl-alpha-D-muramoyl-L-alanyl-gamma-D-glutamyl-meso-2,6-diaminopimeloyl-D-alanyl-D-alanine + di-trans,octa-cis-undecaprenyl phosphate = di-trans,octa-cis-undecaprenyl diphospho-N-acetyl-alpha-D-muramoyl-L-alanyl-D-glutamyl-meso-2,6-diaminopimeloyl-D-alanyl-D-alanine + UMP. The protein operates within cell wall biogenesis; peptidoglycan biosynthesis. In terms of biological role, catalyzes the initial step of the lipid cycle reactions in the biosynthesis of the cell wall peptidoglycan: transfers peptidoglycan precursor phospho-MurNAc-pentapeptide from UDP-MurNAc-pentapeptide onto the lipid carrier undecaprenyl phosphate, yielding undecaprenyl-pyrophosphoryl-MurNAc-pentapeptide, known as lipid I. This chain is Phospho-N-acetylmuramoyl-pentapeptide-transferase, found in Salmonella gallinarum (strain 287/91 / NCTC 13346).